Here is a 234-residue protein sequence, read N- to C-terminus: Leucyl/phenylalanyl-tRNA--protein transferase (234 aa).

This sequence belongs to the L/F-transferase family.

The protein localises to the cytoplasm. The catalysed reaction is N-terminal L-lysyl-[protein] + L-leucyl-tRNA(Leu) = N-terminal L-leucyl-L-lysyl-[protein] + tRNA(Leu) + H(+). The enzyme catalyses N-terminal L-arginyl-[protein] + L-leucyl-tRNA(Leu) = N-terminal L-leucyl-L-arginyl-[protein] + tRNA(Leu) + H(+). It carries out the reaction L-phenylalanyl-tRNA(Phe) + an N-terminal L-alpha-aminoacyl-[protein] = an N-terminal L-phenylalanyl-L-alpha-aminoacyl-[protein] + tRNA(Phe). In terms of biological role, functions in the N-end rule pathway of protein degradation where it conjugates Leu, Phe and, less efficiently, Met from aminoacyl-tRNAs to the N-termini of proteins containing an N-terminal arginine or lysine. This is Leucyl/phenylalanyl-tRNA--protein transferase from Salmonella gallinarum (strain 287/91 / NCTC 13346).